Consider the following 249-residue polypeptide: uncharacterized protein (249 aa).

The first 43 residues, 1–43, serve as a signal peptide directing secretion; it reads MRRGRSRPAGAAPAALLLPLLLLLPLTGCDRLAAAPAEHAAAA. The disordered stretch occupies residues 40–59; it reads AAAAGDPAQDADRGRRLPPV. Positions 68-243 constitute a NodB homology domain; that stretch reads PVVFLTYDDG…TIEEQGLRVG (176 aa).

This is an uncharacterized protein from Streptomyces coelicolor (strain ATCC BAA-471 / A3(2) / M145).